The chain runs to 342 residues: Ribosomal RNA small subunit methyltransferase C (342 aa).

This sequence belongs to the methyltransferase superfamily. RsmC family. As to quaternary structure, monomer.

The protein localises to the cytoplasm. The catalysed reaction is guanosine(1207) in 16S rRNA + S-adenosyl-L-methionine = N(2)-methylguanosine(1207) in 16S rRNA + S-adenosyl-L-homocysteine + H(+). In terms of biological role, specifically methylates the guanine in position 1207 of 16S rRNA in the 30S particle. This is Ribosomal RNA small subunit methyltransferase C from Erwinia tasmaniensis (strain DSM 17950 / CFBP 7177 / CIP 109463 / NCPPB 4357 / Et1/99).